The primary structure comprises 287 residues: Diaminopimelate epimerase (287 aa).

Asn-13, Gln-46, and Asn-66 together coordinate substrate. Cys-75 serves as the catalytic Proton donor. Substrate is bound by residues 76–77 (GN), Asn-166, Asn-199, and 217–218 (ER). Residue Cys-226 is the Proton acceptor of the active site. 227–228 (GT) contacts substrate.

The protein belongs to the diaminopimelate epimerase family. As to quaternary structure, homodimer.

The protein localises to the cytoplasm. It carries out the reaction (2S,6S)-2,6-diaminopimelate = meso-2,6-diaminopimelate. It participates in amino-acid biosynthesis; L-lysine biosynthesis via DAP pathway; DL-2,6-diaminopimelate from LL-2,6-diaminopimelate: step 1/1. In terms of biological role, catalyzes the stereoinversion of LL-2,6-diaminopimelate (L,L-DAP) to meso-diaminopimelate (meso-DAP), a precursor of L-lysine and an essential component of the bacterial peptidoglycan. This is Diaminopimelate epimerase from Paraburkholderia xenovorans (strain LB400).